We begin with the raw amino-acid sequence, 185 residues long: Translocon-associated protein subunit gamma (185 aa).

Position 1 is an N-acetylmethionine (M1). The Lumenal portion of the chain corresponds to 1–27; the sequence is MAPKGGPKQQSEEDLLLQDFSRNLSAK. A Phosphoserine modification is found at S11. Residues 28–48 form a helical membrane-spanning segment; it reads SSALFFGNAFIVSAIPIWLYW. At 49–54 the chain is on the cytoplasmic side; that stretch reads RIWHMD. The helical transmembrane segment at 55–76 threads the bilayer; that stretch reads LIQSAVLYSVMTLVSTYLVAFA. At 77–135 the chain is on the lumenal side; that stretch reads YKNVKFVLKHKVAQKREDAVSKEVTRKLSEADNRKMSRKEKDERILWKKNEVADYEATT. Position 105 is a phosphoserine (S105). A helical transmembrane segment spans residues 136–157; the sequence is FSIFYNNTLFLVLVIVASFFIL. The Cytoplasmic segment spans residues 158-163; the sequence is KNFNPT. The chain crosses the membrane as a helical span at residues 164–184; it reads VNYILSISASSGLIALLSTGS.

Belongs to the TRAP-gamma family. Heterotetramer of TRAP-alpha, TRAP-beta, TRAP-delta and TRAP-gamma.

It localises to the endoplasmic reticulum membrane. Its function is as follows. TRAP proteins are part of a complex whose function is to bind calcium to the ER membrane and thereby regulate the retention of ER resident proteins. The sequence is that of Translocon-associated protein subunit gamma (SSR3) from Bos taurus (Bovine).